We begin with the raw amino-acid sequence, 173 residues long: Putative metal-dependent hydrolase BcerKBAB4_2443 (173 aa).

Zn(2+) contacts are provided by His-65, His-156, and His-160.

It belongs to the metal hydrolase YfiT family. As to quaternary structure, homodimer. Zn(2+) is required as a cofactor.

The protein resides in the cytoplasm. Functionally, possible metal-dependent hydrolase. The chain is Putative metal-dependent hydrolase BcerKBAB4_2443 from Bacillus mycoides (strain KBAB4) (Bacillus weihenstephanensis).